Here is a 208-residue protein sequence, read N- to C-terminus: Protein-L-isoaspartate O-methyltransferase (208 aa).

Ser-59 is a catalytic residue.

It belongs to the methyltransferase superfamily. L-isoaspartyl/D-aspartyl protein methyltransferase family. In terms of assembly, monomer.

The protein localises to the cytoplasm. The enzyme catalyses [protein]-L-isoaspartate + S-adenosyl-L-methionine = [protein]-L-isoaspartate alpha-methyl ester + S-adenosyl-L-homocysteine. In terms of biological role, catalyzes the methyl esterification of L-isoaspartyl residues in peptides and proteins that result from spontaneous decomposition of normal L-aspartyl and L-asparaginyl residues. It plays a role in the repair and/or degradation of damaged proteins. This Shigella flexneri protein is Protein-L-isoaspartate O-methyltransferase (pcm).